A 786-amino-acid polypeptide reads, in one-letter code: Zinc finger transcription factor YRM1 (786 aa).

The segment at 1–25 is disordered; that stretch reads MSKRGSLQDRASPSEETVKKAQKRR. Positions 31 to 59 form a DNA-binding region, zn(2)-C6 fungal-type; that stretch reads CAFCRKRKLRCDQQKPMCSTCKTRGRSGC. Positions 721–747 are disordered; it reads PLAGNSPGLPPEEVRNNSENASHNNET. Residues 737 to 747 show a composition bias toward polar residues; that stretch reads NSENASHNNET.

The protein resides in the cytoplasm. It is found in the nucleus. Functionally, transcription factor involved in the regulation of multidrug resistance genes. Acts in concert with YRR1. The polypeptide is Zinc finger transcription factor YRM1 (YRM1) (Saccharomyces cerevisiae (strain ATCC 204508 / S288c) (Baker's yeast)).